The primary structure comprises 43 residues: Mu-conotoxin-like Cal 12.2c (43 aa).

Arginine 1 is a propeptide. 4 cysteine pairs are disulfide-bonded: cysteine 4–cysteine 16, cysteine 11–cysteine 24, cysteine 18–cysteine 29, and cysteine 23–cysteine 35. Tryptophan 31 carries the post-translational modification 6'-bromotryptophan. Position 36 is a 4-hydroxyproline (proline 36). Position 40 is a 6'-bromotryptophan (tryptophan 40).

In terms of tissue distribution, expressed by the venom duct.

It localises to the secreted. Mu-conotoxins block voltage-gated sodium channels. This toxin reversibly blocks voltage-gated sodium channel in cephalopods, with no alteration in the voltage dependence of sodium conductance or on the kinetics of inactivation. This Californiconus californicus (California cone) protein is Mu-conotoxin-like Cal 12.2c.